We begin with the raw amino-acid sequence, 229 residues long: Potassium/proton antiporter CemA (229 aa).

2 consecutive transmembrane segments (helical) span residues 114–134 (IIYF…LIIL) and 189–209 (IISG…KYWI).

The protein belongs to the CemA family.

It is found in the plastid. It localises to the chloroplast inner membrane. The catalysed reaction is K(+)(in) + H(+)(out) = K(+)(out) + H(+)(in). In terms of biological role, contributes to K(+)/H(+) antiport activity by supporting proton efflux to control proton extrusion and homeostasis in chloroplasts in a light-dependent manner to modulate photosynthesis. Prevents excessive induction of non-photochemical quenching (NPQ) under continuous-light conditions. Indirectly promotes efficient inorganic carbon uptake into chloroplasts. The chain is Potassium/proton antiporter CemA from Lotus japonicus (Lotus corniculatus var. japonicus).